The primary structure comprises 290 residues: 4-hydroxy-tetrahydrodipicolinate synthase (290 aa).

Threonine 44 lines the pyruvate pocket. Tyrosine 132 functions as the Proton donor/acceptor in the catalytic mechanism. Lysine 160 functions as the Schiff-base intermediate with substrate in the catalytic mechanism. Isoleucine 202 provides a ligand contact to pyruvate.

It belongs to the DapA family. As to quaternary structure, homotetramer; dimer of dimers.

It localises to the cytoplasm. It catalyses the reaction L-aspartate 4-semialdehyde + pyruvate = (2S,4S)-4-hydroxy-2,3,4,5-tetrahydrodipicolinate + H2O + H(+). It participates in amino-acid biosynthesis; L-lysine biosynthesis via DAP pathway; (S)-tetrahydrodipicolinate from L-aspartate: step 3/4. Its function is as follows. Catalyzes the condensation of (S)-aspartate-beta-semialdehyde [(S)-ASA] and pyruvate to 4-hydroxy-tetrahydrodipicolinate (HTPA). The sequence is that of 4-hydroxy-tetrahydrodipicolinate synthase from Cereibacter sphaeroides (strain ATCC 17025 / ATH 2.4.3) (Rhodobacter sphaeroides).